The primary structure comprises 73 residues: DNA-directed RNA polymerase subunit omega (73 aa).

Belongs to the RNA polymerase subunit omega family. The RNAP catalytic core consists of 2 alpha, 1 beta, 1 beta' and 1 omega subunit. When a sigma factor is associated with the core the holoenzyme is formed, which can initiate transcription.

It carries out the reaction RNA(n) + a ribonucleoside 5'-triphosphate = RNA(n+1) + diphosphate. Its function is as follows. Promotes RNA polymerase assembly. Latches the N- and C-terminal regions of the beta' subunit thereby facilitating its interaction with the beta and alpha subunits. This chain is DNA-directed RNA polymerase subunit omega, found in Clostridium novyi (strain NT).